Reading from the N-terminus, the 142-residue chain is Small ribosomal subunit protein uS12y (142 aa).

Proline 61 is subject to Hydroxyproline.

The protein belongs to the universal ribosomal protein uS12 family.

The chain is Small ribosomal subunit protein uS12y (RPS23B) from Arabidopsis thaliana (Mouse-ear cress).